The following is a 219-amino-acid chain: FMN-dependent NADH:quinone oxidoreductase 2 (219 aa).

FMN contacts are provided by residues serine 10 and 23 to 25 (SIS).

This sequence belongs to the azoreductase type 1 family. As to quaternary structure, homodimer. The cofactor is FMN.

The catalysed reaction is 2 a quinone + NADH + H(+) = 2 a 1,4-benzosemiquinone + NAD(+). The enzyme catalyses N,N-dimethyl-1,4-phenylenediamine + anthranilate + 2 NAD(+) = 2-(4-dimethylaminophenyl)diazenylbenzoate + 2 NADH + 2 H(+). In terms of biological role, quinone reductase that provides resistance to thiol-specific stress caused by electrophilic quinones. Functionally, also exhibits azoreductase activity. Catalyzes the reductive cleavage of the azo bond in aromatic azo compounds to the corresponding amines. This Colwellia psychrerythraea (strain 34H / ATCC BAA-681) (Vibrio psychroerythus) protein is FMN-dependent NADH:quinone oxidoreductase 2.